Consider the following 120-residue polypeptide: Meiosis expressed gene 1 protein homolog (120 aa).

Residues 1-45 (MDGLAIGGVSAPMTAERPQQVKKQLSRRTPDAADGRKPTRMERAK) form a disordered region. Residues 28–45 (RTPDAADGRKPTRMERAK) show a composition bias toward basic and acidic residues.

The protein belongs to the MEIG1 family.

The polypeptide is Meiosis expressed gene 1 protein homolog (Oxyrrhis marina (Dinoflagellate)).